The sequence spans 426 residues: MANIEIPYGKSKLAFDLPDERIQGILRSKAGSYKVNMSEEDIVKRALENPIGTKRLQDLAEGKKNIVIITSDHTRPVPSRITLPLLLDEIRKKNKSANVKILIATGFHRGTTLQEMKAKFGEDLVENEQFVVHDSRNSENMELIGTLPSGGKLEINKLAVEADLLVAEGFIEPHFFAGFSGGRKSILPGIASVQCILANHCSEFIKNPYARTGVLENNPIHRDMIYAAKKANLAFILNVVIDSSHKIVNAFAGHSEKAHLKGCEFVSEIATVNAKPADIVITSNGGYPLDQNIYQSVKGMTAGEAACKDGGVIIIAAECADGHGGEGFYRWFKESKDPQDVMNKILSRGRDETLPDQWEAQILARILINHKVIMVTDSKNYEYVKDMFMTPAKDLGEALKIAESIVNNDSKINVIPDGVSVIVREK.

72-75 (DHTR) provides a ligand contact to Ni(II)-pyridinium-3,5-bisthiocarboxylate mononucleotide. Residues histidine 108 and histidine 174 each act as proton donor/acceptor in the active site. Ni(II)-pyridinium-3,5-bisthiocarboxylate mononucleotide is bound by residues lysine 184 and histidine 200. Substrate is bound by residues glutamine 295 and lysine 298.

Belongs to the lactate racemase family. Homodimer. Ni(II)-pyridinium-3,5-bisthiocarboxylate mononucleotide is required as a cofactor.

The enzyme catalyses (S)-lactate = (R)-lactate. Its activity is regulated as follows. Activation of the apo-enzyme requires the three accessory proteins LarB, LarE and LarC, that are involved in the biosynthesis of the nickel-pincer cofactor of LarA. Its function is as follows. Catalyzes the interconversion between the D- and L-isomers of lactate. In Thermoanaerobacterium thermosaccharolyticum (strain ATCC 7956 / DSM 571 / NCIMB 9385 / NCA 3814 / NCTC 13789 / WDCM 00135 / 2032) (Clostridium thermosaccharolyticum), this protein is Lactate racemase.